The following is a 901-amino-acid chain: Protein translocase subunit SecA (901 aa).

Residues Gln-87, 105 to 109, and Asp-512 each bind ATP; that span reads GEGKT. The disordered stretch occupies residues 852–901; the sequence is AQMQQLSHQDDDSAAAAALAAQTGDRKVGRNDPCPCGSGKKYKQCHGRLS. Residues Cys-885, Cys-887, Cys-896, and His-897 each coordinate Zn(2+). The segment covering 891–901 has biased composition (basic residues); it reads KKYKQCHGRLS.

It belongs to the SecA family. In terms of assembly, monomer and homodimer. Part of the essential Sec protein translocation apparatus which comprises SecA, SecYEG and auxiliary proteins SecDF-YajC and YidC. The cofactor is Zn(2+).

It localises to the cell inner membrane. The protein localises to the cytoplasm. The catalysed reaction is ATP + H2O + cellular proteinSide 1 = ADP + phosphate + cellular proteinSide 2.. In terms of biological role, part of the Sec protein translocase complex. Interacts with the SecYEG preprotein conducting channel. Has a central role in coupling the hydrolysis of ATP to the transfer of proteins into and across the cell membrane, serving both as a receptor for the preprotein-SecB complex and as an ATP-driven molecular motor driving the stepwise translocation of polypeptide chains across the membrane. The sequence is that of Protein translocase subunit SecA from Citrobacter koseri (strain ATCC BAA-895 / CDC 4225-83 / SGSC4696).